The primary structure comprises 1140 residues: Protein FAM184A (1140 aa).

Coiled coils occupy residues 57-256 (ALNT…NKAQ), 296-800 (AILR…IEME), and 868-907 (RITD…LEFK). The tract at residues 1063-1128 (PNLSALESGG…EASPVASPDP (66 aa)) is disordered.

This sequence belongs to the FAM184 family.

Its subcellular location is the cytoplasm. The protein localises to the P-body. The protein resides in the cytoskeleton. It is found in the microtubule organizing center. It localises to the centrosome. Its subcellular location is the centriolar satellite. This Homo sapiens (Human) protein is Protein FAM184A.